We begin with the raw amino-acid sequence, 238 residues long: Probable transcriptional regulatory protein SMU_1789c (238 aa).

This sequence belongs to the TACO1 family. YeeN subfamily.

The protein localises to the cytoplasm. This Streptococcus mutans serotype c (strain ATCC 700610 / UA159) protein is Probable transcriptional regulatory protein SMU_1789c.